A 417-amino-acid polypeptide reads, in one-letter code: Serine hydroxymethyltransferase (417 aa).

(6S)-5,6,7,8-tetrahydrofolate is bound by residues Leu122 and 126–128 (GHL). Lys230 is subject to N6-(pyridoxal phosphate)lysine. 355–357 (SPF) lines the (6S)-5,6,7,8-tetrahydrofolate pocket.

Belongs to the SHMT family. Homodimer. Requires pyridoxal 5'-phosphate as cofactor.

The protein localises to the cytoplasm. The catalysed reaction is (6R)-5,10-methylene-5,6,7,8-tetrahydrofolate + glycine + H2O = (6S)-5,6,7,8-tetrahydrofolate + L-serine. It functions in the pathway one-carbon metabolism; tetrahydrofolate interconversion. The protein operates within amino-acid biosynthesis; glycine biosynthesis; glycine from L-serine: step 1/1. Catalyzes the reversible interconversion of serine and glycine with tetrahydrofolate (THF) serving as the one-carbon carrier. This reaction serves as the major source of one-carbon groups required for the biosynthesis of purines, thymidylate, methionine, and other important biomolecules. Also exhibits THF-independent aldolase activity toward beta-hydroxyamino acids, producing glycine and aldehydes, via a retro-aldol mechanism. The sequence is that of Serine hydroxymethyltransferase from Francisella tularensis subsp. novicida (strain U112).